The following is a 259-amino-acid chain: tRNA pseudouridine synthase A (259 aa).

The active-site Nucleophile is the aspartate 52. Position 110 (tyrosine 110) interacts with substrate.

It belongs to the tRNA pseudouridine synthase TruA family. In terms of assembly, homodimer.

It carries out the reaction uridine(38/39/40) in tRNA = pseudouridine(38/39/40) in tRNA. Its function is as follows. Formation of pseudouridine at positions 38, 39 and 40 in the anticodon stem and loop of transfer RNAs. This Coprothermobacter proteolyticus (strain ATCC 35245 / DSM 5265 / OCM 4 / BT) protein is tRNA pseudouridine synthase A.